We begin with the raw amino-acid sequence, 153 residues long: ATP synthase subunit b' (153 aa).

The chain crosses the membrane as a helical span at residues 20-40 (TLPLMAVQVVLLTFILNALFF).

This sequence belongs to the ATPase B chain family. F-type ATPases have 2 components, F(1) - the catalytic core - and F(0) - the membrane proton channel. F(1) has five subunits: alpha(3), beta(3), gamma(1), delta(1), epsilon(1). F(0) has four main subunits: a(1), b(1), b'(1) and c(10-14). The alpha and beta chains form an alternating ring which encloses part of the gamma chain. F(1) is attached to F(0) by a central stalk formed by the gamma and epsilon chains, while a peripheral stalk is formed by the delta, b and b' chains.

The protein resides in the cellular thylakoid membrane. Functionally, f(1)F(0) ATP synthase produces ATP from ADP in the presence of a proton or sodium gradient. F-type ATPases consist of two structural domains, F(1) containing the extramembraneous catalytic core and F(0) containing the membrane proton channel, linked together by a central stalk and a peripheral stalk. During catalysis, ATP synthesis in the catalytic domain of F(1) is coupled via a rotary mechanism of the central stalk subunits to proton translocation. Its function is as follows. Component of the F(0) channel, it forms part of the peripheral stalk, linking F(1) to F(0). The b'-subunit is a diverged and duplicated form of b found in plants and photosynthetic bacteria. This Prochlorococcus marinus (strain NATL2A) protein is ATP synthase subunit b'.